The primary structure comprises 544 residues: Zinc finger and SCAN domain-containing protein 25 (544 aa).

Glycyl lysine isopeptide (Lys-Gly) (interchain with G-Cter in SUMO2) cross-links involve residues Lys-3 and Lys-22. Residues 42–124 (RLRFRQFRYQ…AMVEDLTERA (83 aa)) enclose the SCAN box domain. Residue Lys-128 forms a Glycyl lysine isopeptide (Lys-Gly) (interchain with G-Cter in SUMO2) linkage. The disordered stretch occupies residues 157–189 (VEVKPEWGMPPGEGVQGPDPGTEEQLSQDPGDE). Residues Lys-278 and Lys-285 each participate in a glycyl lysine isopeptide (Lys-Gly) (interchain with G-Cter in SUMO2) cross-link. C2H2-type zinc fingers lie at residues 348–370 (FQCP…QRTH), 375–397 (YGCV…QRTH), 403–425 (YVCS…QRSH), 431–453 (YKCG…RRTH), 459–480 (YTCE…RRAH), and 486–508 (YGCQ…QRIH). The C2H2-type 7; degenerate zinc finger occupies 514-536 (YHCPACGRSFNQRSILNRHQKTQ).

The protein belongs to the krueppel C2H2-type zinc-finger protein family.

It localises to the nucleus. Its function is as follows. May be involved in transcriptional regulation. This Homo sapiens (Human) protein is Zinc finger and SCAN domain-containing protein 25 (ZSCAN25).